The sequence spans 485 residues: MALHELTIGQAREKLLSKEISSQDLTKAVLDRIEAVEPQVDAYLTVSKEEAMEAAQKADKALAQGETAPLCGIPLAIKDVMCTKGVLTTCASKILGNFVPPYDATSITKLKEAGAVLVGKTNMDEFAMGSSTENSAFKTTKNPWDLTRTPGGSSGGSAAAVAADMCLGAFGSDTGGSIRQPGSHCSVVGLKPTYGRVSRYGLVAFASSLDQIGPFAKTVEDAAILLQAVAGYDPSDSTSVNVEVPDYTTAIQEDVKGMRVGMPKEYFEMGGLTPDVKNSVDQAIKTLESQGVEVMDVSLPHSKYCVAVYYVIAPAEASSNLARYDGVKYGMREERDSLIDMYHATRSSGFGPEVQRRIIIGTYALSAGYYDAYYGKASQVRTLIMEDYKKAFEKCDAIISPVAPTPAFKLGENTDDPLTMYLSDIFTLSANLAGVCGVSVPCGFSSEGLPIGLQLQGSHFQEEKILRLGHHFQKATDFHTKRPNL.

Catalysis depends on charge relay system residues lysine 78 and serine 153. Serine 177 functions as the Acyl-ester intermediate in the catalytic mechanism.

The protein belongs to the amidase family. GatA subfamily. Heterotrimer of A, B and C subunits.

The catalysed reaction is L-glutamyl-tRNA(Gln) + L-glutamine + ATP + H2O = L-glutaminyl-tRNA(Gln) + L-glutamate + ADP + phosphate + H(+). Its function is as follows. Allows the formation of correctly charged Gln-tRNA(Gln) through the transamidation of misacylated Glu-tRNA(Gln) in organisms which lack glutaminyl-tRNA synthetase. The reaction takes place in the presence of glutamine and ATP through an activated gamma-phospho-Glu-tRNA(Gln). The chain is Glutamyl-tRNA(Gln) amidotransferase subunit A from Desulfatibacillum aliphaticivorans.